Reading from the N-terminus, the 723-residue chain is Beta-xylosidase (723 aa).

The N-terminal stretch at 1–19 (MKKLWLMGLLLASFFTTVA) is a signal peptide.

The protein belongs to the glycosyl hydrolase 3 family.

Its subcellular location is the periplasm. Its function is as follows. Xylosidase involved in ulvan degradation. Ulvan is the main polysaccharide component of the Ulvales (green seaweed) cell wall. It is composed of disaccharide building blocks comprising 3-sulfated rhamnose (Rha3S) linked to D-glucuronic acid (GlcA), L-iduronic acid (IduA), or D-xylose (Xyl). Beta-xylosidase converts Xyl-Rha3S, a product of alpha-L-rhamnosidase acting on Rha-Xyl-Rha3S oligosaccharides, further to Xyl and Rha3S. The enzyme is able to degrade 4-methylumbelliferyl-beta-D-xylopyranoside (MUX) in vitro. This chain is Beta-xylosidase, found in Formosa agariphila (strain DSM 15362 / KCTC 12365 / LMG 23005 / KMM 3901 / M-2Alg 35-1).